The sequence spans 492 residues: GlcNAc-binding protein A (492 aa).

A signal peptide spans 1–23; it reads MNKSSTKTLIALSMMAVSSGVSA. Residues 24–204 form the Chitin-binding type-4 domain; the sequence is HGYVSETNDG…AFYNVIDVKF (181 aa). The Chitin-binding type-3 domain occupies 443–484; the sequence is AGTKVLAEDSNVYQCKEFPYSGYCVQWTETATNFAPGVGSDW.

This sequence belongs to the GbpA family.

It is found in the secreted. Functionally, probably interacts with GlcNAc residues. May promote attachment to both epithelial cell surfaces and chitin. This chain is GlcNAc-binding protein A, found in Aliivibrio fischeri (strain MJ11) (Vibrio fischeri).